A 767-amino-acid polypeptide reads, in one-letter code: Polyribonucleotide nucleotidyltransferase (767 aa).

The Mg(2+) site is built by Asp-488 and Asp-494. In terms of domain architecture, KH spans Pro-555–Ile-614. One can recognise an S1 motif domain in the interval Gly-624–Lys-692. Positions Gly-700–Arg-742 are enriched in basic and acidic residues. The segment at Gly-700–Gln-767 is disordered. Low complexity predominate over residues Gly-752–Gln-767.

The protein belongs to the polyribonucleotide nucleotidyltransferase family. Requires Mg(2+) as cofactor.

It is found in the cytoplasm. The enzyme catalyses RNA(n+1) + phosphate = RNA(n) + a ribonucleoside 5'-diphosphate. In terms of biological role, involved in mRNA degradation. Catalyzes the phosphorolysis of single-stranded polyribonucleotides processively in the 3'- to 5'-direction. This is Polyribonucleotide nucleotidyltransferase from Leptothrix cholodnii (strain ATCC 51168 / LMG 8142 / SP-6) (Leptothrix discophora (strain SP-6)).